A 230-amino-acid polypeptide reads, in one-letter code: Sugar fermentation stimulation protein homolog (230 aa).

This sequence belongs to the SfsA family.

The sequence is that of Sugar fermentation stimulation protein homolog from Clostridium tetani (strain Massachusetts / E88).